Consider the following 398-residue polypeptide: Mannitol-1-phosphate 5-dehydrogenase (398 aa).

10 to 21 (AVHFGAGNIGRG) contacts NAD(+). Lys-221 is an active-site residue.

The protein belongs to the mannitol dehydrogenase family. As to quaternary structure, monomer.

It carries out the reaction D-mannitol 1-phosphate + NAD(+) = beta-D-fructose 6-phosphate + NADH + H(+). Its function is as follows. Catalyzes the NAD(H)-dependent interconversion of D-fructose 6-phosphate and D-mannitol 1-phosphate in the mannitol metabolic pathway. The chain is Mannitol-1-phosphate 5-dehydrogenase from Neurospora crassa (strain ATCC 24698 / 74-OR23-1A / CBS 708.71 / DSM 1257 / FGSC 987).